A 115-amino-acid chain; its full sequence is Aspartate 1-decarboxylase (115 aa).

Serine 24 functions as the Schiff-base intermediate with substrate; via pyruvic acid in the catalytic mechanism. Residue serine 24 is modified to Pyruvic acid (Ser). Threonine 56 is a substrate binding site. Residue tyrosine 57 is the Proton donor of the active site. Position 72-74 (glycine 72–alanine 74) interacts with substrate.

The protein belongs to the PanD family. As to quaternary structure, heterooctamer of four alpha and four beta subunits. It depends on pyruvate as a cofactor. In terms of processing, is synthesized initially as an inactive proenzyme, which is activated by self-cleavage at a specific serine bond to produce a beta-subunit with a hydroxyl group at its C-terminus and an alpha-subunit with a pyruvoyl group at its N-terminus.

It localises to the cytoplasm. It catalyses the reaction L-aspartate + H(+) = beta-alanine + CO2. It participates in cofactor biosynthesis; (R)-pantothenate biosynthesis; beta-alanine from L-aspartate: step 1/1. Functionally, catalyzes the pyruvoyl-dependent decarboxylation of aspartate to produce beta-alanine. This is Aspartate 1-decarboxylase from Pseudothermotoga lettingae (strain ATCC BAA-301 / DSM 14385 / NBRC 107922 / TMO) (Thermotoga lettingae).